Consider the following 555-residue polypeptide: Cytochrome P450 monooxygenase abl2 (555 aa).

Helical transmembrane passes span 38–58 (SFDL…ALFI) and 141–161 (VFIG…APLA). Asparagine 325 and asparagine 360 each carry an N-linked (GlcNAc...) asparagine glycan. Cysteine 489 lines the heme pocket.

This sequence belongs to the cytochrome P450 family. Heme serves as cofactor.

It is found in the membrane. The protein operates within hormone biosynthesis. Its function is as follows. Cytochrome P450 monooxygenase; part of the gene cluster that mediates the biosynthesis of abscisic acid (ABA), a phytohormone that acts antagonistically toward salicylic acid (SA), jasmonic acid (JA) and ethylene (ETH) signaling, to impede plant defense responses. The first step of the pathway catalyzes the reaction from farnesyl diphosphate to alpha-ionylideneethane performed by the alpha-ionylideneethane synthase abl3 via a three-step reaction mechanism involving 2 neutral intermediates, beta-farnesene and allofarnesene. The cytochrome P450 monooxygenase abl1 might then be involved in the conversion of alpha-ionylideneethane to alpha-ionylideneacetic acid. Alpha-ionylideneacetic acid is further converted to abscisic acid in 2 steps involving the cytochrome P450 monooxygenase abl2 and the short-chain dehydrogenase/reductase abl4, via the intermediates 1'-deoxy-ABA or 1',4'-trans-diol-ABA, depending on the order of action of these 2 enzymes. Abl2 is responsible for the hydroxylation of carbon atom C-1' and abl4 might be involved in the oxidation of the C-4' carbon atom. The sequence is that of Cytochrome P450 monooxygenase abl2 from Leptosphaeria maculans (strain JN3 / isolate v23.1.3 / race Av1-4-5-6-7-8) (Blackleg fungus).